A 564-amino-acid chain; its full sequence is Pyruvate decarboxylase (564 aa).

Pyruvate is bound by residues aspartate 28 and histidine 115. Residues threonine 390 and glycine 413–isoleucine 415 each bind thiamine diphosphate. Aspartate 444 lines the Mg(2+) pocket. Thiamine diphosphate is bound by residues glycine 445 to serine 446 and asparagine 471 to isoleucine 476. Positions 471 and 473 each coordinate Mg(2+). Glutamate 477 contacts pyruvate.

It belongs to the TPP enzyme family. In terms of assembly, homotetramer. It depends on Mg(2+) as a cofactor. Thiamine diphosphate is required as a cofactor.

It catalyses the reaction a 2-oxocarboxylate + H(+) = an aldehyde + CO2. The catalysed reaction is pyruvate + H(+) = acetaldehyde + CO2. This Kluyveromyces marxianus (Yeast) protein is Pyruvate decarboxylase (PDC1).